Here is a 642-residue protein sequence, read N- to C-terminus: Stress-activated map kinase-interacting protein 1 homolog (642 aa).

Residues 189-314 (ARIREVIGYC…EREPLFQGLL (126 aa)) enclose the CRIM domain. Residues 603–642 (IVSPSSDAPSRSSNGKNGGKFRKMSSLMASVMGRRKSDSK) are disordered. Residues 605–615 (SPSSDAPSRSS) show a composition bias toward low complexity.

It belongs to the SIN1 family. Component of the target of rapamycin complex 2 (TORC2).

Its function is as follows. Component of the target of rapamycin complex 2 (TORC2), which transduces signals from growth factors to pathways involved in proliferation, cytoskeletal organization and anabolic output. In response to growth factors, TORC2 phosphorylates and activates AGC protein kinase family members, such as Akt1. Within the TORC2 complex, sinh-1 acts as a substrate adapter which recognizes and binds AGC protein kinase family members for phosphorylation by mTor. The sequence is that of Stress-activated map kinase-interacting protein 1 homolog (sinh-1) from Caenorhabditis elegans.